Here is a 514-residue protein sequence, read N- to C-terminus: CENP-B homolog protein 2 (514 aa).

An HTH CENPB-type domain is found at 70 to 145 (QIRRNRQGKY…KKRCLKHGLK (76 aa)). Positions 172 to 384 (FDPKDIFNMD…FEPSIIYNCF (213 aa)) constitute a DDE-1 domain.

It is found in the nucleus. It localises to the chromosome. Its subcellular location is the centromere. Its function is as follows. Binds to the central core and core-associated repeat regions of centromeric heterochromatin. The chain is CENP-B homolog protein 2 (cbh2) from Schizosaccharomyces pombe (strain 972 / ATCC 24843) (Fission yeast).